Reading from the N-terminus, the 141-residue chain is Nucleoside diphosphate kinase (141 aa).

ATP-binding residues include Lys-11, Phe-59, Arg-87, Thr-93, Arg-104, and Asn-114. The active-site Pros-phosphohistidine intermediate is the His-117.

It belongs to the NDK family. As to quaternary structure, homotetramer. Mg(2+) serves as cofactor.

It is found in the cytoplasm. It carries out the reaction a 2'-deoxyribonucleoside 5'-diphosphate + ATP = a 2'-deoxyribonucleoside 5'-triphosphate + ADP. The enzyme catalyses a ribonucleoside 5'-diphosphate + ATP = a ribonucleoside 5'-triphosphate + ADP. Functionally, major role in the synthesis of nucleoside triphosphates other than ATP. The ATP gamma phosphate is transferred to the NDP beta phosphate via a ping-pong mechanism, using a phosphorylated active-site intermediate. The sequence is that of Nucleoside diphosphate kinase from Polynucleobacter necessarius subsp. necessarius (strain STIR1).